Consider the following 366-residue polypeptide: MDSLQPLFEQLFGSEWGGPLFLLIKNLLLILAIVIPLLLAVAYLTFAERKIIAYMQVRVGPNRVTFFDIPWLRGWGQPIADAVKAIMKEIIIPTGANKFLFLLAPVLAIGPALAAWAVVPFSPELVLADINAGLLYILAMTSLGVYGVIIAGWASNSKYAFLGAMRSAAQVVSYELAMGFALVCVLMMSSSLNLGDIVAGQQGGSFLNWYLIPLFPMFLVYFISGVAETNRAPFDVAEGESEIVAGFHVDYSGMAFTVFFLAEYANMILVATLASIMFLGGWLPPVDIAPFNLIPGMVWLLLKIAFMLFFFLWFRATFPRYRYDQIMRLGWKVFIPLTLVWIVVLGMVMQLPEVVRQSFPLNLWFN.

The next 8 helical transmembrane spans lie at 27–47 (LLLI…LTFA), 99–119 (FLFL…WAVV), 134–154 (LLYI…AGWA), 168–188 (AAQV…VLMM), 206–226 (FLNW…ISGV), 268–288 (ILVA…PVDI), 294–314 (IPGM…FLWF), and 329–349 (LGWK…GMVM).

This sequence belongs to the complex I subunit 1 family. As to quaternary structure, NDH-1 is composed of 14 different subunits. Subunits NuoA, H, J, K, L, M, N constitute the membrane sector of the complex.

Its subcellular location is the cell inner membrane. It carries out the reaction a quinone + NADH + 5 H(+)(in) = a quinol + NAD(+) + 4 H(+)(out). NDH-1 shuttles electrons from NADH, via FMN and iron-sulfur (Fe-S) centers, to quinones in the respiratory chain. The immediate electron acceptor for the enzyme in this species is believed to be ubiquinone. Couples the redox reaction to proton translocation (for every two electrons transferred, four hydrogen ions are translocated across the cytoplasmic membrane), and thus conserves the redox energy in a proton gradient. This subunit may bind ubiquinone. The polypeptide is NADH-quinone oxidoreductase subunit H (Nitrosomonas europaea (strain ATCC 19718 / CIP 103999 / KCTC 2705 / NBRC 14298)).